A 656-amino-acid chain; its full sequence is ATP-dependent zinc metalloprotease FtsH (656 aa).

Residues 1–10 are Cytoplasmic-facing; sequence MGDNRWLKNS. Residues 11–31 form a helical membrane-spanning segment; that stretch reads FVYLIILVAALALFFQYLGPG. Topologically, residues 32–116 are extracellular; the sequence is ASQTEEKGIA…IVQPAPAWGG (85 aa). A helical transmembrane segment spans residues 117–137; sequence LLSIFTILLPTLLLIGFFVFF. Residues 138–656 are Cytoplasmic-facing; that stretch reads MRQAQGSNNQ…GLGGPSPLPA (519 aa). 209–216 is an ATP binding site; the sequence is GPPGTGKT. Residue His432 coordinates Zn(2+). Glu433 is an active-site residue. Residues His436 and Asp511 each coordinate Zn(2+). Residues 622-632 are compositionally biased toward polar residues; it reads FSKSGSTTPNG. The segment at 622–656 is disordered; sequence FSKSGSTTPNGRTEDRPAQPDAPQMGLGGPSPLPA.

This sequence in the central section; belongs to the AAA ATPase family. The protein in the C-terminal section; belongs to the peptidase M41 family. Homohexamer. The cofactor is Zn(2+).

The protein resides in the cell membrane. Acts as a processive, ATP-dependent zinc metallopeptidase for both cytoplasmic and membrane proteins. Plays a role in the quality control of integral membrane proteins. The protein is ATP-dependent zinc metalloprotease FtsH of Chloroflexus aggregans (strain MD-66 / DSM 9485).